A 504-amino-acid polypeptide reads, in one-letter code: Protein Dok-7 (504 aa).

Residues 4 to 109 (AALVEGQVKL…WDARIRYALG (106 aa)) form the PH domain. Residues 105–210 (RYALGEVHRF…RGISPTKGPF (106 aa)) form the IRS-type PTB domain. Disordered stretches follow at residues 210–229 (FGLR…TVEE), 249–351 (SHAG…YSSS), and 411–483 (LCLA…PHAG). Low complexity-rich tracts occupy residues 263–279 (LSSS…SASS) and 288–310 (SSSS…AGEA). The segment covering 331-341 (GRQSSSDSGIA) has biased composition (polar residues).

Homodimer. Forms a heterotetramer composed of 2 DOK7 and 2 MUSK molecules which facilitates MUSK trans-autophosphorylation on tyrosine residue and activation. Interacts (via IRS-type PTB domain) with MUSK (via cytoplasmic part); requires MUSK phosphorylation. As to expression, preferentially expressed in skeletal muscle and heart. Present in thigh muscle, diaphragm and heart but not in the liver or spleen (at protein level).

It localises to the cell membrane. It is found in the synapse. Probable muscle-intrinsic activator of MUSK that plays an essential role in neuromuscular synaptogenesis. Acts in aneural activation of MUSK and subsequent acetylcholine receptor (AchR) clustering in myotubes. Induces autophosphorylation of MUSK. The chain is Protein Dok-7 (DOK7) from Homo sapiens (Human).